The primary structure comprises 98 residues: Complement inhibitor RaCI2 (98 aa).

The signal sequence occupies residues 1-21 (MNAVTVLAFTAFALIVHDCYS). Intrachain disulfides connect C35–C59, C40–C61, and C55–C76.

It belongs to the RaCI family. Expressed in salivary glands.

The protein localises to the secreted. Functionally, complement inhibitor. Prevents complement-mediated C5 activation by binding to C5. Binds C5 at a different binding site than the other tick complement inhibitors OmCI and CirpT1, and the drug eculizumab. In Rhipicephalus microplus (Cattle tick), this protein is Complement inhibitor RaCI2.